The primary structure comprises 184 residues: Dirigent protein 13 (184 aa).

The signal sequence occupies residues 1–25 (MANQIYIISLIFLSVLLYQSTTVLS). A disulfide bridge connects residues C36 and C182. N-linked (GlcNAc...) asparagine glycans are attached at residues N55 and N119.

The protein belongs to the plant dirigent protein family. Homodimer. In terms of tissue distribution, expressed in root vasculature and meristems, cotyledons, flowers, siliques, and leaf trichomes. Localized in the interfascicular/vascular cambia and developing xylem.

Its subcellular location is the secreted. The protein resides in the extracellular space. It localises to the apoplast. Dirigent proteins impart stereoselectivity on the phenoxy radical-coupling reaction, yielding optically active lignans from two molecules of coniferyl alcohol in the biosynthesis of lignans, flavonolignans, and alkaloids and thus plays a central role in plant secondary metabolism. This Arabidopsis thaliana (Mouse-ear cress) protein is Dirigent protein 13 (DIR13).